The sequence spans 395 residues: Protein HIGH CHLOROPHYLL FLUORESCENCE PHENOTYPE 244, chloroplastic (395 aa).

The transit peptide at 1–64 (MASLRLPAQL…ERSIVVPVTC (64 aa)) directs the protein to the chloroplast.

The protein belongs to the NmrA-type oxidoreductase family. Component of a high molecular weight complex containing OHP1, OHP2 and HCF244, and PSII core proteins D1/D2, HCF136 and HCF173. Interacts with OHP1. Forms a trimeric complex with OHP1 and OHP2 that mutually stabilizes each subunit.

Its subcellular location is the plastid. The protein resides in the chloroplast stroma. It is found in the chloroplast thylakoid membrane. Its function is as follows. Auxiliary factor required, together with HCF173, for the biogenesis of photosystem II (PSII), especially for the synthesis of the reaction center proteins (e.g. D1), via the regulation of the corresponding mRNA (e.g. psbA) translation initiation (ribosomal loading) and stabilization. Forms a trimeric complex with OHP1 and OHP2 that is required to promote PSII core subunit assembly. The trimeric complex forms a transient PSII reaction center-like complex with PsbA, PsbD, PsbE, PsbF and PsbI subunits in thylakoids for early assembly of PSII as well as PSII repair. The trimeric complex is required for the recruitment of ribosomes to the psbA mRNA during PSII biogenesis and repair. In Arabidopsis thaliana (Mouse-ear cress), this protein is Protein HIGH CHLOROPHYLL FLUORESCENCE PHENOTYPE 244, chloroplastic.